A 389-amino-acid polypeptide reads, in one-letter code: Lipid-A-disaccharide synthase (389 aa).

It belongs to the LpxB family.

It catalyses the reaction a lipid X + a UDP-2-N,3-O-bis[(3R)-3-hydroxyacyl]-alpha-D-glucosamine = a lipid A disaccharide + UDP + H(+). It functions in the pathway bacterial outer membrane biogenesis; LPS lipid A biosynthesis. Condensation of UDP-2,3-diacylglucosamine and 2,3-diacylglucosamine-1-phosphate to form lipid A disaccharide, a precursor of lipid A, a phosphorylated glycolipid that anchors the lipopolysaccharide to the outer membrane of the cell. The sequence is that of Lipid-A-disaccharide synthase from Burkholderia vietnamiensis (strain G4 / LMG 22486) (Burkholderia cepacia (strain R1808)).